A 485-amino-acid chain; its full sequence is Aspartyl/glutamyl-tRNA(Asn/Gln) amidotransferase subunit B (485 aa).

This sequence belongs to the GatB/GatE family. GatB subfamily. Heterotrimer of A, B and C subunits.

It carries out the reaction L-glutamyl-tRNA(Gln) + L-glutamine + ATP + H2O = L-glutaminyl-tRNA(Gln) + L-glutamate + ADP + phosphate + H(+). The enzyme catalyses L-aspartyl-tRNA(Asn) + L-glutamine + ATP + H2O = L-asparaginyl-tRNA(Asn) + L-glutamate + ADP + phosphate + 2 H(+). Its function is as follows. Allows the formation of correctly charged Asn-tRNA(Asn) or Gln-tRNA(Gln) through the transamidation of misacylated Asp-tRNA(Asn) or Glu-tRNA(Gln) in organisms which lack either or both of asparaginyl-tRNA or glutaminyl-tRNA synthetases. The reaction takes place in the presence of glutamine and ATP through an activated phospho-Asp-tRNA(Asn) or phospho-Glu-tRNA(Gln). The sequence is that of Aspartyl/glutamyl-tRNA(Asn/Gln) amidotransferase subunit B from Anaplasma marginale (strain Florida).